Reading from the N-terminus, the 386-residue chain is Succinate--CoA ligase [ADP-forming] subunit beta (386 aa).

The ATP-grasp domain occupies 9 to 244 (KEILRKYGVP…HDEEDPLETR (236 aa)). Residues lysine 46, 53–55 (GRG), glutamate 99, cysteine 102, and glutamate 107 contribute to the ATP site. Positions 199 and 213 each coordinate Mg(2+). Substrate is bound by residues asparagine 264 and 321-323 (GIM).

The protein belongs to the succinate/malate CoA ligase beta subunit family. Heterotetramer of two alpha and two beta subunits. Mg(2+) serves as cofactor.

It carries out the reaction succinate + ATP + CoA = succinyl-CoA + ADP + phosphate. The catalysed reaction is GTP + succinate + CoA = succinyl-CoA + GDP + phosphate. It functions in the pathway carbohydrate metabolism; tricarboxylic acid cycle; succinate from succinyl-CoA (ligase route): step 1/1. Succinyl-CoA synthetase functions in the citric acid cycle (TCA), coupling the hydrolysis of succinyl-CoA to the synthesis of either ATP or GTP and thus represents the only step of substrate-level phosphorylation in the TCA. The beta subunit provides nucleotide specificity of the enzyme and binds the substrate succinate, while the binding sites for coenzyme A and phosphate are found in the alpha subunit. This chain is Succinate--CoA ligase [ADP-forming] subunit beta, found in Rickettsia prowazekii (strain Madrid E).